Consider the following 665-residue polypeptide: Translation factor GUF1 homolog, mitochondrial (665 aa).

A mitochondrion-targeting transit peptide spans 1-35 (MAGAAVLRRSARRIYRHLAAAPAFSRSVLQQPKRL). Positions 34-53 (RLLSSQSSPEHGARGAVSGS) are disordered. A tr-type G domain is found at 61 to 249 (ERVRNFSIIA…AVIERIPSPP (189 aa)). GTP is bound by residues 70–77 (AHVDHGKS), 142–146 (DTPGH), and 196–199 (NKID).

It belongs to the TRAFAC class translation factor GTPase superfamily. Classic translation factor GTPase family. LepA subfamily.

Its subcellular location is the mitochondrion inner membrane. It catalyses the reaction GTP + H2O = GDP + phosphate + H(+). Promotes mitochondrial protein synthesis. May act as a fidelity factor of the translation reaction, by catalyzing a one-codon backward translocation of tRNAs on improperly translocated ribosomes. Binds to mitochondrial ribosomes in a GTP-dependent manner. This chain is Translation factor GUF1 homolog, mitochondrial, found in Sorghum bicolor (Sorghum).